The primary structure comprises 647 residues: CRE-binding bZIP protein SKO1 (647 aa).

4 disordered regions span residues 1-119, 135-204, 305-331, and 353-429; these read MSSE…GSKR, STTN…QMPG, TPTT…TSTK, and KENE…EEQE. The span at 51 to 85 shows a compositional bias: polar residues; sequence RNNSTSTITQHSQRSTHSLNSIPEENGNSTVTDNS. Residue Ser-94 is modified to Phosphoserine. Position 113 is a phosphothreonine (Thr-113). 2 stretches are compositionally biased toward low complexity: residues 138-194 and 305-329; these read NPSQ…SGNG and TPTT…PNTS. 2 stretches are compositionally biased toward polar residues: residues 357 to 368 and 396 to 405; these read NLTTQIENNDQF and RKNSAVTTAP. Ser-399 bears the Phosphoserine mark. Residues 429 to 492 form the bZIP domain; sequence ERKRKEFLER…PSSSSNSQFN (64 aa). The segment at 430–451 is basic motif; that stretch reads RKRKEFLERNRVAASKFRKRKK. The segment at 454-461 is leucine-zipper; it reads IKKIENDL. The residue at position 558 (Ser-558) is a Phosphoserine.

Belongs to the bZIP family.

It localises to the nucleus. Binds to the CRE motif 5'-TGACGTCA-3' and acts as a repressor of transcription of the SUC2 gene and most probably other genes. In Saccharomyces cerevisiae (strain ATCC 204508 / S288c) (Baker's yeast), this protein is CRE-binding bZIP protein SKO1 (SKO1).